Consider the following 309-residue polypeptide: Ribosomal RNA small subunit methyltransferase H (309 aa).

S-adenosyl-L-methionine is bound by residues 39–41, Asp59, Phe83, Asp100, and Gln107; that span reads GGH.

Belongs to the methyltransferase superfamily. RsmH family.

It localises to the cytoplasm. The enzyme catalyses cytidine(1402) in 16S rRNA + S-adenosyl-L-methionine = N(4)-methylcytidine(1402) in 16S rRNA + S-adenosyl-L-homocysteine + H(+). Its function is as follows. Specifically methylates the N4 position of cytidine in position 1402 (C1402) of 16S rRNA. In Delftia acidovorans (strain DSM 14801 / SPH-1), this protein is Ribosomal RNA small subunit methyltransferase H.